We begin with the raw amino-acid sequence, 352 residues long: Uroporphyrinogen decarboxylase (352 aa).

Residues 27–31, aspartate 77, tyrosine 154, threonine 209, and histidine 325 contribute to the substrate site; that span reads RQAGR.

It belongs to the uroporphyrinogen decarboxylase family. As to quaternary structure, homodimer.

The protein localises to the cytoplasm. It carries out the reaction uroporphyrinogen III + 4 H(+) = coproporphyrinogen III + 4 CO2. The protein operates within porphyrin-containing compound metabolism; protoporphyrin-IX biosynthesis; coproporphyrinogen-III from 5-aminolevulinate: step 4/4. Functionally, catalyzes the decarboxylation of four acetate groups of uroporphyrinogen-III to yield coproporphyrinogen-III. The chain is Uroporphyrinogen decarboxylase from Legionella pneumophila subsp. pneumophila (strain Philadelphia 1 / ATCC 33152 / DSM 7513).